A 420-amino-acid chain; its full sequence is Probable glycosyltransferase YdaM (420 aa).

4 helical membrane-spanning segments follow: residues 4 to 24 (TLFF…MFLM), 299 to 319 (IIFD…GVIM), 332 to 352 (LHLS…FLFM), and 371 to 391 (FFIV…LVIY).

It belongs to the glycosyltransferase 2 family.

Its subcellular location is the cell membrane. The sequence is that of Probable glycosyltransferase YdaM (ydaM) from Bacillus subtilis (strain 168).